Consider the following 146-residue polypeptide: Single-stranded DNA-binding protein, mitochondrial (146 aa).

The transit peptide at 1–22 (MQHTRRMLNPLLTGLRNLPARG) directs the protein to the mitochondrion. Residues 38 to 142 (VNTVTILGRV…IIADDVLFFR (105 aa)) enclose the SSB domain.

Homotetramer. Uniformly distributed in the early embryo. High levels detected in the anterior and posterior midgut primordia of stage 12 embryos. In larvae, high levels were detected in proliferating tissues including the CNS and digestive tract. In adults, highly expressed in the CNS, digestive tract and ovary.

The protein resides in the mitochondrion. Its function is as follows. Binds preferentially and cooperatively to pyrimidine rich single-stranded DNA (ss-DNA). Required to maintain the copy number of mitochondrial DNA (mtDNA) and plays crucial roles during mtDNA replication that stimulate activity of the gamma complex polymerase PolG1/tam at the replication fork. Promotes PolG1 activity largely by organizing the template DNA and eliminating secondary structures to favor ss-DNA conformations that facilitate PolG1 activity. The polypeptide is Single-stranded DNA-binding protein, mitochondrial (mtSSB) (Drosophila melanogaster (Fruit fly)).